The sequence spans 396 residues: Acetate kinase (396 aa).

A Mg(2+)-binding site is contributed by Asn-8. Lys-15 is a binding site for ATP. Arg-89 provides a ligand contact to substrate. The active-site Proton donor/acceptor is the Asp-146. ATP is bound by residues His-206 to Gly-210, Asp-283 to Arg-285, and Gly-331 to Asn-335. A Mg(2+)-binding site is contributed by Glu-383.

Belongs to the acetokinase family. In terms of assembly, homodimer. Mg(2+) serves as cofactor. The cofactor is Mn(2+).

The protein resides in the cytoplasm. The enzyme catalyses acetate + ATP = acetyl phosphate + ADP. The protein operates within metabolic intermediate biosynthesis; acetyl-CoA biosynthesis; acetyl-CoA from acetate: step 1/2. Catalyzes the formation of acetyl phosphate from acetate and ATP. Can also catalyze the reverse reaction. This is Acetate kinase from Streptococcus pneumoniae serotype 2 (strain D39 / NCTC 7466).